A 455-amino-acid chain; its full sequence is Anthocyanidin 3-O-glucosyltransferase (455 aa).

The active-site Proton acceptor is H18. H18 lines the an anthocyanidin pocket. The active-site Charge relay is the D118. T139 is a UDP-alpha-D-glucose binding site. H148 provides a ligand contact to an anthocyanidin. Positions 336, 338, 353, 356, 358, and 361 each coordinate UDP-alpha-D-glucose. Residue G376 participates in an anthocyanidin binding. Positions 377 and 378 each coordinate UDP-alpha-D-glucose.

Belongs to the UDP-glycosyltransferase family.

The enzyme catalyses an anthocyanidin + UDP-alpha-D-glucose + H(+) = an anthocyanidin 3-O-beta-D-glucoside + UDP. The protein operates within pigment biosynthesis; anthocyanin biosynthesis. In the presence of other necessary color factors, this glycosylation reaction allows the accumulation of anthocyanin pigments. This chain is Anthocyanidin 3-O-glucosyltransferase (BZ1), found in Hordeum vulgare (Barley).